Reading from the N-terminus, the 202-residue chain is N-(5'-phosphoribosyl)anthranilate isomerase (202 aa).

Belongs to the TrpF family.

It carries out the reaction N-(5-phospho-beta-D-ribosyl)anthranilate = 1-(2-carboxyphenylamino)-1-deoxy-D-ribulose 5-phosphate. The protein operates within amino-acid biosynthesis; L-tryptophan biosynthesis; L-tryptophan from chorismate: step 3/5. This is N-(5'-phosphoribosyl)anthranilate isomerase from Listeria monocytogenes serotype 4b (strain F2365).